A 397-amino-acid polypeptide reads, in one-letter code: Dual oxidase maturation factor 1 (397 aa).

A run of 2 helical transmembrane segments spans residues 26 to 46 (FVIF…LPGV) and 57 to 77 (YVLM…PCWA). Asn109 carries an N-linked (GlcNAc...) asparagine glycan. The next 3 helical transmembrane spans lie at 191–211 (AAIW…LFLP), 218–238 (ILAT…LSPC), and 261–281 (CFYL…GLGI). Positions 324 to 376 (YGTNTTNSSRDKNDISSDKTAGSSGFQSRTSTCQSSASSASLRSQSSIETVHD) are disordered. N-linked (GlcNAc...) asparagine glycosylation is found at Asn327 and Asn330. Residues 341-350 (DKTAGSSGFQ) show a composition bias toward polar residues. The segment covering 351 to 370 (SRTSTCQSSASSASLRSQSS) has biased composition (low complexity).

The protein belongs to the DUOXA family. Interacts with bli-3 and tsp-15. Interacts with csnk-1. In terms of tissue distribution, expressed in the hypodermis, specifically in seam cells, the terminal bulb of the pharynx, the distal region of the gonadal arm, vulva, spermatheca and uterus.

The protein localises to the membrane. In terms of biological role, plays a role in cuticle biogenesis. In complex with tsp-15 and the dual oxidase bli-3, promotes the generation of reactive oxygen species (ROS) and tyrosine cross-linking of collagen, thus stabilizing cuticular extracellular matrix. The sequence is that of Dual oxidase maturation factor 1 from Caenorhabditis elegans.